The chain runs to 506 residues: Sucrose transport protein SUT3 (506 aa).

Residues 1–20 are Cytoplasmic-facing; the sequence is MAVDMELDGGGDGKGKAPPQ. The helical transmembrane segment at 21–41 threads the bilayer; it reads ISLSGLFLACMVAGGVQYGWA. At 42 to 54 the chain is on the extracellular side; that stretch reads LQLSLLTPYIQTL. The helical transmembrane segment at 55–75 threads the bilayer; sequence GIPHALTSVMWLCGPIAGLIV. Residues 76–94 are Cytoplasmic-facing; that stretch reads QPCVGLYSDKCTSSLGRRR. Residues 95-115 traverse the membrane as a helical segment; the sequence is PFILTGCIIICISVIVIGFSS. Residues 116–135 lie on the Extracellular side of the membrane; that stretch reads DIGYALGDATEDCKVYRGPR. The chain crosses the membrane as a helical span at residues 136-156; it reads YHAAAAFILGFWLLDFSNNTV. Over 157–171 the chain is Cytoplasmic; that stretch reads QGPARALMADLSGRH. The helical transmembrane segment at 172–192 threads the bilayer; that stretch reads GPSAANAIFCSWMALGNILGY. Over 193–220 the chain is Extracellular; that stretch reads SSGSTNDWHKWFPFLMTRACCEACANLK. The helical transmembrane segment at 221–241 threads the bilayer; the sequence is AAFLVAVVFLGLSTAVTMVFA. The Cytoplasmic portion of the chain corresponds to 242–275; it reads REVALDPVAAAKRNEGEASGPLAVFKGMKNLPVG. Residues 276 to 296 traverse the membrane as a helical segment; the sequence is MPSVLIVTGLTWLSWFPFILF. Topologically, residues 297-327 are extracellular; that stretch reads DTDWMGREIYHGRPDGSPAEVTAFQEGVRQG. A helical membrane pass occupies residues 328–348; sequence AFGLLLNSIVLGISSFLIEPM. Topologically, residues 349 to 355 are cytoplasmic; that stretch reads CRRLGAR. A helical transmembrane segment spans residues 356 to 376; sequence AVWVMSSAVVCVAMAAVSVLS. Over 377–404 the chain is Extracellular; that stretch reads AWSLGDFGGSVQDAARAPAEEGGVRASA. A helical transmembrane segment spans residues 405 to 425; that stretch reads LALFVFLGLPFAVLCSVPFAV. Topologically, residues 426 to 441 are cytoplasmic; that stretch reads TAQLTASRGGGQGLCT. The helical transmembrane segment at 442 to 462 threads the bilayer; it reads GVLNISIVVPQMAIALGAGPW. Residues 463–470 are Extracellular-facing; it reads DELFGEGN. A helical transmembrane segment spans residues 471-491; the sequence is IPAFAMASVFAAAAAAAGVVL. Residues 492–506 lie on the Cytoplasmic side of the membrane; the sequence is LPKVSVRSVSMAGGH.

This sequence belongs to the glycoside-pentoside-hexuronide (GPH) cation symporter transporter (TC 2.A.2.4) family. As to quaternary structure, homodimer.

The protein localises to the cell membrane. It participates in glycan biosynthesis; sucrose metabolism. Responsible for the transport of sucrose into the cell, with the concomitant uptake of protons (symport system). May also transport other glucosides. The protein is Sucrose transport protein SUT3 (SUT3) of Oryza sativa subsp. indica (Rice).